The sequence spans 283 residues: Pantothenate synthetase (283 aa).

30 to 37 (MGNLHAGH) provides a ligand contact to ATP. H37 functions as the Proton donor in the catalytic mechanism. Q61 serves as a coordination point for (R)-pantoate. Residue Q61 coordinates beta-alanine. 149-152 (GRKD) contributes to the ATP binding site. Q155 provides a ligand contact to (R)-pantoate. 186-189 (LSSR) lines the ATP pocket.

Belongs to the pantothenate synthetase family. As to quaternary structure, homodimer.

It localises to the cytoplasm. It catalyses the reaction (R)-pantoate + beta-alanine + ATP = (R)-pantothenate + AMP + diphosphate + H(+). Its pathway is cofactor biosynthesis; (R)-pantothenate biosynthesis; (R)-pantothenate from (R)-pantoate and beta-alanine: step 1/1. In terms of biological role, catalyzes the condensation of pantoate with beta-alanine in an ATP-dependent reaction via a pantoyl-adenylate intermediate. The sequence is that of Pantothenate synthetase from Chromohalobacter salexigens (strain ATCC BAA-138 / DSM 3043 / CIP 106854 / NCIMB 13768 / 1H11).